The following is a 152-amino-acid chain: MVVQKSVVKSRVFGELEVSEENIIFFEEGIPAFENLKKFVIVKEDQSPFYWLQSVEDKDIAFVIINPFEIKPDYEFDLPDEVVNKLEITSAQDVAVFCIVVIPEDVKQTRVNLKAPIIINVHKRKGIQYLLDDERYPLRYYLFENLNSDEQK.

This sequence belongs to the FliW family. In terms of assembly, interacts with translational regulator CsrA and flagellin(s).

The protein resides in the cytoplasm. Acts as an anti-CsrA protein, binds CsrA and prevents it from repressing translation of its target genes, one of which is flagellin. Binds to flagellin and participates in the assembly of the flagellum. The chain is Flagellar assembly factor FliW from Caldicellulosiruptor bescii (strain ATCC BAA-1888 / DSM 6725 / KCTC 15123 / Z-1320) (Anaerocellum thermophilum).